Here is a 395-residue protein sequence, read N- to C-terminus: Guanine nucleotide-binding protein subunit beta-5 (395 aa).

WD repeat units follow at residues 103-142, 145-184, 193-234, 236-278, 279-318, 320-362, and 365-394; these read GHGN…KEHA, MPCT…NENM, MHTN…QSFH, HGAD…QAFE, THES…EVAI, SKES…RVSI, and GHEN…LRVW.

Belongs to the WD repeat G protein beta family. As to quaternary structure, component of a complex composed of RGS9 (isoform RGS9-1), GNB5 and RGS9BP; within this complex, the presence of GNB5 stabilizes both itself and RGS9 and increases RGS9 GTPase-activating protein (GAP) activity. Interacts with RGS7, forming the RGS7-GNB5 complex; within this complex, the presence of GNB5 increases RGS7 GTPase-activating protein (GAP) activity. Interacts with GPR158; promotes the GTPase activator activity of the RGS7-GNB5 complex in absence of glycine, in contrast GTPase activator activity of the RGS7-GNB5 complex is inhibited in presence of glycine. Interacts with RGS6. In terms of tissue distribution, widely expressed.

Its subcellular location is the membrane. Enhances GTPase-activating protein (GAP) activity of regulator of G protein signaling (RGS) proteins, such as RGS7 and RGS9, hence involved in the termination of the signaling initiated by the G protein coupled receptors (GPCRs) by accelerating the GTP hydrolysis on the G-alpha subunits, thereby promoting their inactivation. Increases RGS7 GTPase-activating protein (GAP) activity, thereby regulating mood and cognition. Increases RGS9 GTPase-activating protein (GAP) activity, hence contributes to the deactivation of G protein signaling initiated by D(2) dopamine receptors. May play an important role in neuronal signaling, including in the parasympathetic, but not sympathetic, control of heart rate. The sequence is that of Guanine nucleotide-binding protein subunit beta-5 (GNB5) from Homo sapiens (Human).